Reading from the N-terminus, the 341-residue chain is Putative UPF0607 protein FLJ37424 (341 aa).

2 disordered regions span residues 72–131 (PKTE…NPRP) and 216–283 (GLLM…LPCL). Basic and acidic residues predominate over residues 79-101 (EEPKEATEVKDQVETQGQEDNKR). A compositionally biased stretch (polar residues) spans 108-127 (EAASTSRPLETQGNLTSSWY). The span at 243–252 (AGHRSHKRKL) shows a compositional bias: basic residues.

This sequence belongs to the UPF0607 family.

This is Putative UPF0607 protein FLJ37424 from Homo sapiens (Human).